The chain runs to 490 residues: Tryptophan 5-hydroxylase 2 (490 aa).

A Phosphoserine modification is found at S19. Polar residues predominate over residues L31–G42. The segment at L31 to A58 is disordered. Positions K43 to A58 are enriched in basic and acidic residues. The region spanning A65–N140 is the ACT domain. Residues H318, H323, and E363 each coordinate Fe cation.

Belongs to the biopterin-dependent aromatic amino acid hydroxylase family. In terms of assembly, interacts with DNAJC12. Fe(2+) serves as cofactor. As to expression, brain specific.

The enzyme catalyses (6R)-L-erythro-5,6,7,8-tetrahydrobiopterin + L-tryptophan + O2 = 5-hydroxy-L-tryptophan + (4aS,6R)-4a-hydroxy-L-erythro-5,6,7,8-tetrahydrobiopterin. It functions in the pathway aromatic compound metabolism; serotonin biosynthesis; serotonin from L-tryptophan: step 1/2. In Homo sapiens (Human), this protein is Tryptophan 5-hydroxylase 2 (TPH2).